Reading from the N-terminus, the 890-residue chain is Serine/threonine-protein kinase greatwall (890 aa).

The 814-residue stretch at 33-846 folds into the Protein kinase domain; the sequence is FSIVKPISRG…LKDLKAHHLF (814 aa). ATP-binding positions include 39–47 and Lys62; that span reads ISRGAFGKV. Asp156 (proton acceptor) is an active-site residue. Disordered regions lie at residues 324-353, 412-434, 517-541, 559-592, and 609-628; these read AEAPPYLNSSRVKDCSSEQARSKKPMGSSA, HKDLGKDDQGELEKLTISPDSPP, NYASDRKSEDDYISAPRTHENLGSG, DGEANSNSGCEEGENQKESLNQDSESSSADMSVT, and ELSFEESPSESNEETTPENK. Residues 412–425 are compositionally biased toward basic and acidic residues; that stretch reads HKDLGKDDQGELEK. Polar residues predominate over residues 576–592; sequence ESLNQDSESSSADMSVT. The segment covering 615 to 624 has biased composition (acidic residues); it reads SPSESNEETT. Thr752 carries the phosphothreonine; by CDK1 modification. The AGC-kinase C-terminal domain occupies 847–890; sequence HAIEWDDLQNLPMPFIPQPDDETDTTYFEARNNAQHLKVSGFSL.

It belongs to the protein kinase superfamily. AGC Ser/Thr protein kinase family. Phosphorylation at Thr-752 by CDK1 during M phase activates its kinase activity. Maximum phosphorylation occurs in prometaphase.

Its subcellular location is the cytoplasm. It localises to the cytoskeleton. It is found in the microtubule organizing center. The protein resides in the centrosome. The protein localises to the nucleus. It catalyses the reaction L-seryl-[protein] + ATP = O-phospho-L-seryl-[protein] + ADP + H(+). The enzyme catalyses L-threonyl-[protein] + ATP = O-phospho-L-threonyl-[protein] + ADP + H(+). In terms of biological role, serine/threonine kinase that plays a key role in M phase by acting as a regulator of mitosis entry and maintenance. Acts by promoting the inactivation of protein phosphatase 2A (PP2A) during M phase: does not directly inhibit PP2A but acts by mediating phosphorylation and subsequent activation of arpp19 and ensa at 'Ser-67', 2 phosphatase inhibitors that specifically inhibit the ppp2r2d (PR55-delta) subunit of PP2A. Inactivation of PP2A during M phase is essential to keep cyclin-B1-CDK1 activity high. Following DNA damage, it is also involved in checkpoint recovery by being inhibited. This chain is Serine/threonine-protein kinase greatwall (mastl), found in Xenopus tropicalis (Western clawed frog).